A 281-amino-acid polypeptide reads, in one-letter code: UPF0046 protein C25E10.12 (281 aa).

Belongs to the UPF0046 family.

The protein is UPF0046 protein C25E10.12 of Caenorhabditis elegans.